Here is a 121-residue protein sequence, read N- to C-terminus: UPF0231 protein ESA_03214 (121 aa).

This sequence belongs to the UPF0231 family.

The sequence is that of UPF0231 protein ESA_03214 from Cronobacter sakazakii (strain ATCC BAA-894) (Enterobacter sakazakii).